A 378-amino-acid chain; its full sequence is F-box/kelch-repeat protein At4g29370 (378 aa).

Positions 23 to 69 (TSLFLQLPDEILVNCLARLSKSSYRSLSLVCKTFRSLLHSQPLYSAR) constitute an F-box domain. Kelch repeat units lie at residues 124–172 (GSKI…VLDD), 173–218 (KIYV…VRKI), 220–259 (VVGGKIYVKTGAEFMDWIYDVKRGKWSAADEYMSLLWSNS), and 260–305 (WCVI…NDNR).

In Arabidopsis thaliana (Mouse-ear cress), this protein is F-box/kelch-repeat protein At4g29370.